The following is a 358-amino-acid chain: Nicotinate-nucleotide--dimethylbenzimidazole phosphoribosyltransferase (358 aa).

The active-site Proton acceptor is the Glu313.

It belongs to the CobT family.

It carries out the reaction 5,6-dimethylbenzimidazole + nicotinate beta-D-ribonucleotide = alpha-ribazole 5'-phosphate + nicotinate + H(+). Its pathway is nucleoside biosynthesis; alpha-ribazole biosynthesis; alpha-ribazole from 5,6-dimethylbenzimidazole: step 1/2. In terms of biological role, catalyzes the synthesis of alpha-ribazole-5'-phosphate from nicotinate mononucleotide (NAMN) and 5,6-dimethylbenzimidazole (DMB). The protein is Nicotinate-nucleotide--dimethylbenzimidazole phosphoribosyltransferase of Corynebacterium glutamicum (strain ATCC 13032 / DSM 20300 / JCM 1318 / BCRC 11384 / CCUG 27702 / LMG 3730 / NBRC 12168 / NCIMB 10025 / NRRL B-2784 / 534).